The chain runs to 121 residues: UPF0045 protein sll0230 (121 aa).

It belongs to the UPF0045 family.

This Synechocystis sp. (strain ATCC 27184 / PCC 6803 / Kazusa) protein is UPF0045 protein sll0230.